The following is a 64-amino-acid chain: Disintegrin VB7A (64 aa).

Positions 1–64 (NSGNPCCDPV…SDCPRNPYKD (64 aa)) constitute a Disintegrin domain. 4 disulfide bridges follow: cysteine 6/cysteine 29, cysteine 20/cysteine 26, cysteine 25/cysteine 50, and cysteine 38/cysteine 57. Residues 42–44 (RGD) carry the Cell attachment site motif.

Belongs to the disintegrin family. Dimeric disintegrin subfamily. In terms of assembly, heterodimer with VB7B; disulfide-linked. Expressed by the venom gland.

The protein localises to the secreted. Functionally, poor inhibitor of platelet aggregation. The disintegrin inhibits the adhesion of cells expressing the RGD-dependent integrin alpha-5/beta-1 (ITGA5/ITGB1) to immobilized fibronectin. Inhibition on alpha-2b/beta-3 (ITGA2B/ITGB3) is low. This Vipera berus berus (Common viper) protein is Disintegrin VB7A.